The sequence spans 510 residues: MKHQLVIVVDFGGQYNQLIARRVRDLNVYCEVVPYKKALDVIKEKQPIGIIFTGGPNSVYEENSPQIEKEIFELNIPILGMCYGMQLISKDFGGVVEKAKNREFGKTNAKISNQSSILKGMSDESIVWMSHTDFVSEKPEGFDIIQTTDSCPVAAIANEDKKIFAVQYHPEVNHTVEGKTLIKNFLYEICKADGDWTMENFLEEQIQKIRKTVGDKKVLLALSGGVDSSVCAALLSRAIGKNLTCVFVDHGLMRKNEGDEVEAAFKNDELNFVRVNAKDRFLNKLKGVSDPEQKRKIIGEEFIRVFEDEAKKIGSVDFLAQGTIYPDVIESGQGDASVIKSHHNVGGLPDVVDFKDLIEPLRDLFKDEVRRLGLELEMPEYLVYRQPFPGPGLGIRVMGEITEEKLEVLREADFIFRDEVAKAGIDKDINQYFAVITNNRTVGVMGDFRTYDYTLALRAVTTTDFMTADWARIPYEVLDKTSVRIINEVDHINRIVYDITSKPPATIEWE.

The Glutamine amidotransferase type-1 domain maps to 5–195; that stretch reads LVIVVDFGGQ…LYEICKADGD (191 aa). The active-site Nucleophile is Cys-82. Active-site residues include His-169 and Glu-171. The GMPS ATP-PPase domain maps to 196–385; it reads WTMENFLEEQ…LEMPEYLVYR (190 aa). 223-229 serves as a coordination point for ATP; that stretch reads SGGVDSS.

In terms of assembly, homodimer.

The enzyme catalyses XMP + L-glutamine + ATP + H2O = GMP + L-glutamate + AMP + diphosphate + 2 H(+). It participates in purine metabolism; GMP biosynthesis; GMP from XMP (L-Gln route): step 1/1. Catalyzes the synthesis of GMP from XMP. This is GMP synthase [glutamine-hydrolyzing] from Finegoldia magna (strain ATCC 29328 / DSM 20472 / WAL 2508) (Peptostreptococcus magnus).